Reading from the N-terminus, the 179-residue chain is Shikimate kinase (179 aa).

ATP is bound at residue 14–19 (GAGKTT). Position 18 (T18) interacts with Mg(2+). Substrate-binding residues include D36, R60, and G82. R120 contacts ATP. Residue R139 participates in substrate binding.

This sequence belongs to the shikimate kinase family. As to quaternary structure, monomer. Mg(2+) is required as a cofactor.

The protein resides in the cytoplasm. The catalysed reaction is shikimate + ATP = 3-phosphoshikimate + ADP + H(+). It functions in the pathway metabolic intermediate biosynthesis; chorismate biosynthesis; chorismate from D-erythrose 4-phosphate and phosphoenolpyruvate: step 5/7. In terms of biological role, catalyzes the specific phosphorylation of the 3-hydroxyl group of shikimic acid using ATP as a cosubstrate. This is Shikimate kinase from Methylococcus capsulatus (strain ATCC 33009 / NCIMB 11132 / Bath).